Consider the following 238-residue polypeptide: DNA repair protein RecO (238 aa).

It belongs to the RecO family.

Its function is as follows. Involved in DNA repair and RecF pathway recombination. The protein is DNA repair protein RecO of Flavobacterium psychrophilum (strain ATCC 49511 / DSM 21280 / CIP 103535 / JIP02/86).